A 482-amino-acid polypeptide reads, in one-letter code: 2-succinylbenzoate--CoA ligase (482 aa).

Belongs to the ATP-dependent AMP-binding enzyme family. MenE subfamily.

It catalyses the reaction 2-succinylbenzoate + ATP + CoA = 2-succinylbenzoyl-CoA + AMP + diphosphate. Its pathway is quinol/quinone metabolism; 1,4-dihydroxy-2-naphthoate biosynthesis; 1,4-dihydroxy-2-naphthoate from chorismate: step 5/7. It functions in the pathway quinol/quinone metabolism; menaquinone biosynthesis. Functionally, converts 2-succinylbenzoate (OSB) to 2-succinylbenzoyl-CoA (OSB-CoA). The chain is 2-succinylbenzoate--CoA ligase from Bacillus anthracis (strain A0248).